Reading from the N-terminus, the 308-residue chain is Cytochrome b (308 aa).

A run of 4 helical transmembrane segments spans residues 1 to 21 (FGLL…LLAA), 45 to 66 (WLIR…YLHI), 81 to 101 (WNIG…GYVL), and 146 to 166 (FFAL…VHLT). The heme b site is built by His51 and His65. Residues His150 and His164 each contribute to the heme b site. Position 169 (His169) interacts with a ubiquinone. 3 helical membrane passes run 194–214 (TKDM…ALFS), 256–276 (LGGV…PLLH), and 288–308 (LSQI…WVGS).

Belongs to the cytochrome b family. As to quaternary structure, the cytochrome bc1 complex contains 11 subunits: 3 respiratory subunits (MT-CYB, CYC1 and UQCRFS1), 2 core proteins (UQCRC1 and UQCRC2) and 6 low-molecular weight proteins (UQCRH/QCR6, UQCRB/QCR7, UQCRQ/QCR8, UQCR10/QCR9, UQCR11/QCR10 and a cleavage product of UQCRFS1). This cytochrome bc1 complex then forms a dimer. Requires heme b as cofactor.

The protein localises to the mitochondrion inner membrane. In terms of biological role, component of the ubiquinol-cytochrome c reductase complex (complex III or cytochrome b-c1 complex) that is part of the mitochondrial respiratory chain. The b-c1 complex mediates electron transfer from ubiquinol to cytochrome c. Contributes to the generation of a proton gradient across the mitochondrial membrane that is then used for ATP synthesis. The sequence is that of Cytochrome b (MT-CYB) from Pomatostomus temporalis (Grey-crowned babbler).